A 68-amino-acid chain; its full sequence is Amphipathic peptide OcyC1 (68 aa).

A signal peptide spans 1 to 23 (MKAQLCILLIALVLFQTFSQSDA). Phenylalanine amide is present on Phe36. Positions 38–68 (RRGLNDLDDLDELFDGEISQADVDFLNELMR) are excised as a propeptide.

This sequence belongs to the non-disulfide-bridged peptide (NDBP) superfamily. Short antimicrobial peptide (group 4) family. Expressed by the venom gland.

It localises to the secreted. Its subcellular location is the target cell membrane. Functionally, antimicrobial peptide. Inhibits the growth of Gram-positive and Gram-negative bacteria. Shows antifungal activity with MIC values ranging from 12.5 to 25 uM. Also shows an inhibitory activity on C.albicans biofilms at high concentrations. Shows low cytotoxic activity and has weak hemolytic activity. The sequence is that of Amphipathic peptide OcyC1 from Opisthacanthus cayaporum (South American scorpion).